Here is a 530-residue protein sequence, read N- to C-terminus: Berberine bridge enzyme-like 4 (530 aa).

Positions 1 to 19 (MKGTLSVLCLVLLVSVLEA) are cleaved as a signal peptide. An intrachain disulfide couples C32 to C95. A glycan (N-linked (GlcNAc...) asparagine) is linked at N52. One can recognise an FAD-binding PCMH-type domain in the interval 73-247 (NYRKLLAIVA…LSWKINLVDV (175 aa)). The segment at residues 110–172 (HDYEGLSYMS…QTLAFPAGVC (63 aa)) is a cross-link (6-(S-cysteinyl)-8alpha-(pros-histidyl)-FAD (His-Cys)). 4 N-linked (GlcNAc...) asparagine glycosylation sites follow: N257, N292, N341, and N441.

The protein belongs to the oxygen-dependent FAD-linked oxidoreductase family. It depends on FAD as a cofactor. Post-translationally, the FAD cofactor is bound via a bicovalent 6-S-cysteinyl, 8alpha-N1-histidyl FAD linkage.

Its subcellular location is the secreted. The protein localises to the cell wall. Its function is as follows. Probable flavin-dependent oxidoreductase. This Arabidopsis thaliana (Mouse-ear cress) protein is Berberine bridge enzyme-like 4.